A 331-amino-acid polypeptide reads, in one-letter code: Phenylalanine--tRNA ligase alpha subunit (331 aa).

A Mg(2+)-binding site is contributed by glutamate 252.

Belongs to the class-II aminoacyl-tRNA synthetase family. Phe-tRNA synthetase alpha subunit type 1 subfamily. As to quaternary structure, tetramer of two alpha and two beta subunits. The cofactor is Mg(2+).

The protein localises to the cytoplasm. It catalyses the reaction tRNA(Phe) + L-phenylalanine + ATP = L-phenylalanyl-tRNA(Phe) + AMP + diphosphate + H(+). This chain is Phenylalanine--tRNA ligase alpha subunit, found in Xanthomonas axonopodis pv. citri (strain 306).